The sequence spans 268 residues: Tryptophan synthase alpha chain (268 aa).

Active-site proton acceptor residues include Glu49 and Asp60.

It belongs to the TrpA family. Tetramer of two alpha and two beta chains.

It carries out the reaction (1S,2R)-1-C-(indol-3-yl)glycerol 3-phosphate + L-serine = D-glyceraldehyde 3-phosphate + L-tryptophan + H2O. It participates in amino-acid biosynthesis; L-tryptophan biosynthesis; L-tryptophan from chorismate: step 5/5. Its function is as follows. The alpha subunit is responsible for the aldol cleavage of indoleglycerol phosphate to indole and glyceraldehyde 3-phosphate. In Xylella fastidiosa (strain 9a5c), this protein is Tryptophan synthase alpha chain.